A 251-amino-acid polypeptide reads, in one-letter code: Triosephosphate isomerase (251 aa).

9 to 11 (NWK) provides a ligand contact to substrate. H95 serves as the catalytic Electrophile. Residue E167 is the Proton acceptor of the active site. Substrate contacts are provided by residues G173, S213, and 234–235 (GG).

It belongs to the triosephosphate isomerase family. As to quaternary structure, homodimer.

It is found in the cytoplasm. It catalyses the reaction D-glyceraldehyde 3-phosphate = dihydroxyacetone phosphate. It participates in carbohydrate biosynthesis; gluconeogenesis. The protein operates within carbohydrate degradation; glycolysis; D-glyceraldehyde 3-phosphate from glycerone phosphate: step 1/1. In terms of biological role, involved in the gluconeogenesis. Catalyzes stereospecifically the conversion of dihydroxyacetone phosphate (DHAP) to D-glyceraldehyde-3-phosphate (G3P). This is Triosephosphate isomerase from Geotalea uraniireducens (strain Rf4) (Geobacter uraniireducens).